The primary structure comprises 123 residues: Snaclec GPIB-binding protein subunit beta (123 aa).

Cystine bridges form between Cys-2-Cys-13, Cys-30-Cys-119, and Cys-96-Cys-111. The region spanning Tyr-9 to Glu-120 is the C-type lectin domain.

The protein belongs to the snaclec family. In terms of assembly, heterodimer of subunits alpha and beta; disulfide-linked. As to expression, expressed by the venom gland.

The protein localises to the secreted. In terms of biological role, binds to platelet GPIb (subunit alpha) (GP1BA) and functions as a receptor blocker for vWF binding to GPIb. The platelet GPIb-binding site resides on the GPIB-BP subunit beta and not on the alpha subunit. At a final concentration of 104 nM totally abolishes vWF-dependent shear-induced platelet aggregation (SIPA) at a high shear stress, but had no effect on SIPA at a low shear stress. The polypeptide is Snaclec GPIB-binding protein subunit beta (Bothrops jararaca (Jararaca)).